The chain runs to 355 residues: MAKLIALTLLGMGLALFRNHQSSYQTRLNALREVQPVELPNCNLVKGIETGSEDLEILPNGLAFISSGLKYPGIKSFNPNSPGKILLMDLNEEDPTVLELGITGSKFDVSSFNPHGISTFTDEDNAMYLLVVNHPDAKSTVELFKFQEEEKSLLHLKTIRHKLLPNLNDIVAVGPEHFYGTNDHYFLDPYLQSWEMYLGLAWSYVVYYSPSEVRVVAEGFDFANGINISPDGKYVYIAELLAHKIHVYEKHANWTLTPLKSLDFNTLVDNISVDPETGDLWVGCHPNGMKIFFYDSENPPASEVLRIQNILTEEPKVTQVYAENGTVLQGSTVASVYKGKLLIGTVFHKALYCEL.

C42 and C353 are oxidised to a cystine. Residues E53 and D54 each contribute to the Ca(2+) site. H115 acts as the Proton acceptor in catalysis. 4 residues coordinate Ca(2+): I117, N168, D169, and N224. A glycan (N-linked (GlcNAc...) asparagine) is linked at N253. Positions 269 and 270 each coordinate Ca(2+). Residues N270 and N324 are each glycosylated (N-linked (GlcNAc...) asparagine).

Belongs to the paraoxonase family. As to quaternary structure, homodimer. Heterooligomer with phosphate-binding protein (HPBP). Interacts with CLU. It depends on Ca(2+) as a cofactor. In terms of processing, glycosylated. Post-translationally, the signal sequence is not cleaved. Present in two forms, form B contains a disulfide bond, form A does not. Plasma, associated with HDL (at protein level). Expressed in liver, but not in heart, brain, placenta, lung, skeletal muscle, kidney or pancreas.

The protein localises to the secreted. Its subcellular location is the extracellular space. The enzyme catalyses a phenyl acetate + H2O = a phenol + acetate + H(+). It carries out the reaction An aryl dialkyl phosphate + H2O = dialkyl phosphate + an aryl alcohol.. It catalyses the reaction an N-acyl-L-homoserine lactone + H2O = an N-acyl-L-homoserine + H(+). Functionally, hydrolyzes the toxic metabolites of a variety of organophosphorus insecticides. Capable of hydrolyzing a broad spectrum of organophosphate substrates and lactones, and a number of aromatic carboxylic acid esters. Mediates an enzymatic protection of low density lipoproteins against oxidative modification and the consequent series of events leading to atheroma formation. The sequence is that of Serum paraoxonase/arylesterase 1 (PON1) from Homo sapiens (Human).